Here is a 121-residue protein sequence, read N- to C-terminus: Fluoride-specific ion channel FluC 1 (121 aa).

4 helical membrane passes run 3–23 (YVYI…ISFL), 35–55 (IANL…IAFF), 64–84 (AITT…LELI), and 92–112 (FITL…LCYV). Na(+) is bound by residues Gly-71 and Thr-74.

The protein belongs to the fluoride channel Fluc/FEX (TC 1.A.43) family.

It is found in the cell membrane. It catalyses the reaction fluoride(in) = fluoride(out). With respect to regulation, na(+) is not transported, but it plays an essential structural role and its presence is essential for fluoride channel function. Fluoride-specific ion channel. Important for reducing fluoride concentration in the cell, thus reducing its toxicity. The protein is Fluoride-specific ion channel FluC 1 of Staphylococcus aureus (strain NCTC 8325 / PS 47).